The following is a 245-amino-acid chain: tRNA pseudouridine synthase A (245 aa).

Asp52 serves as the catalytic Nucleophile. Tyr111 contributes to the substrate binding site.

It belongs to the tRNA pseudouridine synthase TruA family. Homodimer.

The catalysed reaction is uridine(38/39/40) in tRNA = pseudouridine(38/39/40) in tRNA. In terms of biological role, formation of pseudouridine at positions 38, 39 and 40 in the anticodon stem and loop of transfer RNAs. The chain is tRNA pseudouridine synthase A from Xanthobacter autotrophicus (strain ATCC BAA-1158 / Py2).